A 1076-amino-acid chain; its full sequence is DNA-directed RNA polymerase subunit beta (1076 aa).

The protein belongs to the RNA polymerase beta chain family. In plastids the minimal PEP RNA polymerase catalytic core is composed of four subunits: alpha, beta, beta', and beta''. When a (nuclear-encoded) sigma factor is associated with the core the holoenzyme is formed, which can initiate transcription.

It is found in the plastid. The protein localises to the chloroplast. It carries out the reaction RNA(n) + a ribonucleoside 5'-triphosphate = RNA(n+1) + diphosphate. DNA-dependent RNA polymerase catalyzes the transcription of DNA into RNA using the four ribonucleoside triphosphates as substrates. This Hordeum vulgare (Barley) protein is DNA-directed RNA polymerase subunit beta.